A 217-amino-acid polypeptide reads, in one-letter code: Small ribosomal subunit protein uS3c (217 aa).

Positions 43–117 (IKNYVQKNRK…KLNIAITRIA (75 aa)) constitute a KH type-2 domain.

The protein belongs to the universal ribosomal protein uS3 family. As to quaternary structure, part of the 30S ribosomal subunit.

Its subcellular location is the plastid. The protein resides in the chloroplast. In Ranunculus macranthus (Large buttercup), this protein is Small ribosomal subunit protein uS3c (rps3).